Here is a 337-residue protein sequence, read N- to C-terminus: Cytoskeleton protein RodZ (337 aa).

Residues Met1–Gly111 lie on the Cytoplasmic side of the membrane. The HTH cro/C1-type domain occupies Leu19–Leu71. The H-T-H motif DNA-binding region spans Gln30–Glu49. A helical; Signal-anchor for type II membrane protein membrane pass occupies residues Trp112–Trp132. Over Trp133–Gln337 the chain is Periplasmic. A compositionally biased stretch (polar residues) spans Thr145 to Asn167. The segment at Thr145–Val218 is disordered. Over residues Thr168–Gln207 the composition is skewed to low complexity. The segment covering Asn208 to Val218 has biased composition (polar residues).

It belongs to the RodZ family.

It is found in the cell inner membrane. Its function is as follows. Cytoskeletal protein that is involved in cell-shape control through regulation of the length of the long axis. This is Cytoskeleton protein RodZ from Shigella flexneri serotype 5b (strain 8401).